A 536-amino-acid chain; its full sequence is Phosphoenolpyruvate carboxykinase (ATP) (536 aa).

Residues R61, Y195, and K201 each coordinate substrate. Residues K201, H220, and 236 to 244 (GLSGTGKTT) each bind ATP. Positions 201 and 220 each coordinate Mn(2+). D257 serves as a coordination point for Mn(2+). The ATP site is built by E285, R322, and T447. Residue R322 participates in substrate binding.

The protein belongs to the phosphoenolpyruvate carboxykinase (ATP) family. The cofactor is Mn(2+).

The protein localises to the cytoplasm. The enzyme catalyses oxaloacetate + ATP = phosphoenolpyruvate + ADP + CO2. It participates in carbohydrate biosynthesis; gluconeogenesis. In terms of biological role, involved in the gluconeogenesis. Catalyzes the conversion of oxaloacetate (OAA) to phosphoenolpyruvate (PEP) through direct phosphoryl transfer between the nucleoside triphosphate and OAA. The chain is Phosphoenolpyruvate carboxykinase (ATP) from Rhizobium meliloti (strain 1021) (Ensifer meliloti).